A 536-amino-acid polypeptide reads, in one-letter code: C-22 sterol desaturase ERG5A (536 aa).

The helical transmembrane segment at 41–61 (VWTWVFTLVALCIAYDQIAYI) threads the bilayer. Cys481 contributes to the heme binding site.

This sequence belongs to the cytochrome P450 family. Heme is required as a cofactor.

It localises to the endoplasmic reticulum membrane. It carries out the reaction 5-dehydroepisterol + NADPH + O2 + H(+) = ergosta-5,7,22,24(28)-tetraen-3beta-ol + NADP(+) + 2 H2O. It participates in steroid metabolism; ergosterol biosynthesis. C-22 sterol desaturase; part of the third module of ergosterol biosynthesis pathway that includes the late steps of the pathway. ERG5A and ERG5B convert 5-dehydroepisterol into ergosta-5,7,22,24(28)-tetraen-3beta-ol by forming the C-22(23) double bond in the sterol side chain. The third module or late pathway involves the ergosterol synthesis itself through consecutive reactions that mainly occur in the endoplasmic reticulum (ER) membrane. Firstly, the squalene synthase ERG9 catalyzes the condensation of 2 farnesyl pyrophosphate moieties to form squalene, which is the precursor of all steroids. Squalene synthase is crucial for balancing the incorporation of farnesyl diphosphate (FPP) into sterol and nonsterol isoprene synthesis. Secondly, squalene is converted into lanosterol by the consecutive action of the squalene epoxidase ERG1 and the lanosterol synthase ERG7. Then, the delta(24)-sterol C-methyltransferase ERG6 methylates lanosterol at C-24 to produce eburicol. Eburicol is the substrate of the sterol 14-alpha demethylase encoded by CYP51A, CYP51B and CYP51C, to yield 4,4,24-trimethyl ergosta-8,14,24(28)-trienol. CYP51B encodes the enzyme primarily responsible for sterol 14-alpha-demethylation, and plays an essential role in ascospore formation. CYP51A encodes an additional sterol 14-alpha-demethylase, induced on ergosterol depletion and responsible for the intrinsic variation in azole sensitivity. The third CYP51 isoform, CYP51C, does not encode a sterol 14-alpha-demethylase, but is required for full virulence on host wheat ears. The C-14 reductase ERG24 then reduces the C14=C15 double bond which leads to 4,4-dimethylfecosterol. A sequence of further demethylations at C-4, involving the C-4 demethylation complex containing the C-4 methylsterol oxidases ERG25, the sterol-4-alpha-carboxylate 3-dehydrogenase ERG26 and the 3-keto-steroid reductase ERG27, leads to the production of fecosterol via 4-methylfecosterol. ERG28 has a role as a scaffold to help anchor ERG25, ERG26 and ERG27 to the endoplasmic reticulum. The C-8 sterol isomerase ERG2 then catalyzes the reaction which results in unsaturation at C-7 in the B ring of sterols and thus converts fecosterol to episterol. The sterol-C5-desaturases ERG3A and ERG3BB then catalyze the introduction of a C-5 double bond in the B ring to produce 5-dehydroepisterol. The C-22 sterol desaturases ERG5A and ERG5B further convert 5-dehydroepisterol into ergosta-5,7,22,24(28)-tetraen-3beta-ol by forming the C-22(23) double bond in the sterol side chain. Finally, ergosta-5,7,22,24(28)-tetraen-3beta-ol is substrate of the C-24(28) sterol reductase ERG4 to produce ergosterol. This is C-22 sterol desaturase ERG5A from Gibberella zeae (strain ATCC MYA-4620 / CBS 123657 / FGSC 9075 / NRRL 31084 / PH-1) (Wheat head blight fungus).